The sequence spans 123 residues: MAITKEDILEAVGSLTVMELNDLVKAFEEKFGVSAAAVAVAGPAGAGAADAEEKTEFDVVLASAGDQKVGVIKVVRAITGLGLKEAKDIVDGAPKTIKEGVSKAEAEDIQKQLEAAGAKVEIK.

It belongs to the bacterial ribosomal protein bL12 family. As to quaternary structure, homodimer. Part of the ribosomal stalk of the 50S ribosomal subunit. Forms a multimeric L10(L12)X complex, where L10 forms an elongated spine to which 2 to 4 L12 dimers bind in a sequential fashion. Binds GTP-bound translation factors.

Functionally, forms part of the ribosomal stalk which helps the ribosome interact with GTP-bound translation factors. Is thus essential for accurate translation. In Neisseria gonorrhoeae (strain NCCP11945), this protein is Large ribosomal subunit protein bL12.